Reading from the N-terminus, the 354-residue chain is Ferrochelatase (354 aa).

Residues histidine 204 and glutamate 306 each coordinate Fe cation.

Belongs to the ferrochelatase family.

It is found in the cytoplasm. The catalysed reaction is heme b + 2 H(+) = protoporphyrin IX + Fe(2+). The protein operates within porphyrin-containing compound metabolism; protoheme biosynthesis; protoheme from protoporphyrin-IX: step 1/1. In terms of biological role, catalyzes the ferrous insertion into protoporphyrin IX. The polypeptide is Ferrochelatase (Coxiella burnetii (strain RSA 493 / Nine Mile phase I)).